The sequence spans 276 residues: Putative metal-binding protein TC_0696 (276 aa).

Residues 1-18 (MRLLILLLFSFGIIYSHG) form the signal peptide. A divalent metal cation contacts are provided by H59, H121, H185, and D256.

Belongs to the bacterial solute-binding protein 9 family.

Its subcellular location is the periplasm. Functionally, part of an ATP-binding cassette (ABC) transport system involved in metal import. Binds a metal with high affinity and specificity and delivers it to the membrane permease for translocation into the cytoplasm. The sequence is that of Putative metal-binding protein TC_0696 from Chlamydia muridarum (strain MoPn / Nigg).